Here is a 764-residue protein sequence, read N- to C-terminus: Thyrotropin receptor (764 aa).

The signal sequence occupies residues 1–21 (MRPTPLLRLALLLVLPSSLWG). Over 22–413 (ERCPSPPCEC…EFNPCEDIMG (392 aa)) the chain is Extracellular. Cysteine 31 and cysteine 41 are oxidised to a cystine. Residues 51 to 74 (PPSTQTLKFIETHLKTIPSRAFSN) form an LRR 1 repeat. 2 N-linked (GlcNAc...) asparagine glycosylation sites follow: asparagine 77 and asparagine 99. LRR repeat units lie at residues 125–150 (LPLLKFLGIFNTGLRVFPDLTKIYST), 152–174 (VFFILEITDNPYMTSVPANAFQG), 176–199 (SNETLTLKLYNNGFTSIQGHAFNG), 201–223 (KLDAVYLNKNKYLTVIDQDAFAG), and 225–248 (YSGPTLLDISYTSVTALPSKGLEH). N-linked (GlcNAc...) asparagine glycans are attached at residues asparagine 177 and asparagine 198. Residue asparagine 302 is glycosylated (N-linked (GlcNAc...) asparagine). A Sulfotyrosine modification is found at tyrosine 385. Residues 414–441 (YKFLRIVVWFVSLLALLGNVFVLVILLT) form a helical membrane-spanning segment. Topologically, residues 442–450 (SHYKLTVPR) are cytoplasmic. The helical transmembrane segment at 451–473 (FLMCNLAFADFCMGLYLLLIASV) threads the bilayer. Over 474 to 494 (DLYTQSEYYNHAIDWQTGPGC) the chain is Extracellular. Cysteine 494 and cysteine 569 form a disulfide bridge. A helical transmembrane segment spans residues 495-517 (NTAGFFTVFASELSVYTLTVITL). The Cytoplasmic segment spans residues 518–537 (ERWYAITFAMHLDRKIRLWH). Residues 538 to 560 (AYVIMLGGWVCCFLLALLPLVGI) traverse the membrane as a helical segment. The Extracellular portion of the chain corresponds to 561–580 (SSYAKVSICLPMDTETPLAL). A helical transmembrane segment spans residues 581-602 (AYIILVLLLNIIAFIIVCACYV). Residues 603 to 625 (KIYITVRNPHYNPGDKDTRIAKR) are Cytoplasmic-facing. The chain crosses the membrane as a helical span at residues 626 to 649 (MAVLIFTDFMCMAPISFYALSALM). Over 650 to 660 (NKPLITVTNSK) the chain is Extracellular. A helical membrane pass occupies residues 661–682 (ILLVLFYPLNSCANPFLYAIFT). At 683–764 (KAFQRDVFML…TSKEYKQTVL (82 aa)) the chain is on the cytoplasmic side. A PDZ-binding motif is present at residues 762-764 (TVL).

It belongs to the G-protein coupled receptor 1 family. FSH/LSH/TSH subfamily. Interacts with heterodimer GPHA2:GPHB5; this interaction stimulates cAMP production. Interacts (via the PDZ-binding motif) with SCRIB; regulates TSHR trafficking and function. Glycosylated. Post-translationally, sulfated. Sulfation on Tyr-385 plays a role in thyrotropin receptor binding and activation.

Its subcellular location is the cell membrane. It is found in the basolateral cell membrane. Functionally, receptor for the thyroid-stimulating hormone (TSH) or thyrotropin. Also acts as a receptor for the heterodimeric glycoprotein hormone (GPHA2:GPHB5) or thyrostimulin. The activity of this receptor is mediated by G proteins which activate adenylate cyclase. Plays a central role in controlling thyroid cell metabolism. The protein is Thyrotropin receptor (TSHR) of Ovis aries (Sheep).